Here is a 78-residue protein sequence, read N- to C-terminus: D-alanyl carrier protein (78 aa).

Residues 1–77 (MDLKEQIVEI…KVVAKVESLI (77 aa)) enclose the Carrier domain. An O-(pantetheine 4'-phosphoryl)serine modification is found at serine 35.

It belongs to the DltC family. Post-translationally, 4'-phosphopantetheine is transferred from CoA to a specific serine of apo-DCP.

It localises to the cytoplasm. It functions in the pathway cell wall biogenesis; lipoteichoic acid biosynthesis. Carrier protein involved in the D-alanylation of lipoteichoic acid (LTA). The loading of thioester-linked D-alanine onto DltC is catalyzed by D-alanine--D-alanyl carrier protein ligase DltA. The DltC-carried D-alanyl group is further transferred to cell membrane phosphatidylglycerol (PG) by forming an ester bond, probably catalyzed by DltD. D-alanylation of LTA plays an important role in modulating the properties of the cell wall in Gram-positive bacteria, influencing the net charge of the cell wall. This chain is D-alanyl carrier protein, found in Leuconostoc mesenteroides subsp. mesenteroides (strain ATCC 8293 / DSM 20343 / BCRC 11652 / CCM 1803 / JCM 6124 / NCDO 523 / NBRC 100496 / NCIMB 8023 / NCTC 12954 / NRRL B-1118 / 37Y).